Reading from the N-terminus, the 1141-residue chain is Envelopment polyprotein (1141 aa).

Residues 1-18 (MGRLYLIVLGVLITATAG) form the signal peptide. Residues 19–483 (FPRSVHELKI…HSLAVELCVP (465 aa)) are Lumenal-facing. Cystine bridges form between cysteine 30-cysteine 158, cysteine 64-cysteine 164, cysteine 113-cysteine 135, cysteine 140-cysteine 145, cysteine 182-cysteine 192, cysteine 217-cysteine 253, cysteine 242-cysteine 357, cysteine 382-cysteine 441, cysteine 386-cysteine 395, and cysteine 458-cysteine 481. N-linked (GlcNAc...) asparagine; by host glycosylation is present at asparagine 141. Asparagine 353 carries an N-linked (GlcNAc...) asparagine; by host glycan. Asparagine 405 carries an N-linked (GlcNAc...) asparagine; by host glycan. A helical transmembrane segment spans residues 484–506 (GIHGWATIALVITFCFGWLLIPT). Residues 507-633 (TTMVVLKCLR…LGVFRYKSRC (127 aa)) lie on the Cytoplasmic side of the membrane. Positions 522 to 539 (CSHYSTESKFKVILEKVK) are binding to the ribonucleoprotein. 2 CCHC-type zinc fingers span residues 551-571 (CDIC…KKSC) and 576-597 (CPYC…YAVC). 3 binding to the ribonucleoprotein regions span residues 594–611 (YAVC…KKSL), 598–609 (KLTGRFHEALKK), and 617–631 (QRGC…RYKS). Positions 617-640 (QRGCYRTLGVFRYKSRCYVGLVWM) constitute an ITAM domain. Phosphotyrosine is present on residues tyrosine 621 and tyrosine 634. Residues 621–624 (YRTL) carry the YxxL motif. A helical transmembrane segment spans residues 634 to 654 (YVGLVWMCLLTLELIVWAASA). The Lumenal portion of the chain corresponds to 655 to 1110 (DTPLLEPGWS…EWLLGILNGN (456 aa)). 8 cysteine pairs are disulfide-bonded: cysteine 741-cysteine 776, cysteine 745-cysteine 783, cysteine 757-cysteine 890, cysteine 771-cysteine 901, cysteine 786-cysteine 909, cysteine 812-cysteine 821, cysteine 829-cysteine 838, and cysteine 869-cysteine 873. A fusion loop region spans residues 763-783 (YQYETSWSCNPPDCPGVGTGC). Residue asparagine 933 is glycosylated (N-linked (GlcNAc...) asparagine; by host). 5 disulfide bridges follow: cysteine 975/cysteine 1005, cysteine 998/cysteine 1050, cysteine 1015/cysteine 1020, cysteine 1051/cysteine 1056, and cysteine 1090/cysteine 1094. Residues 1111 to 1131 (WVVVAVLVIILLISIFLFSFF) traverse the membrane as a helical segment. A binding to the ribonucleoprotein region spans residues 1127–1141 (LFSFFCPIRSHKKQL). The Cytoplasmic segment spans residues 1132 to 1141 (CPIRSHKKQL).

The protein belongs to the hantavirus envelope glycoprotein family. In terms of assembly, homodimer. Homotetramer; forms heterotetrameric Gn-Gc spikes in the pre-fusion conformation. Interacts (via C-terminus) with the nucleoprotein. Interacts with host TUFM; this interaction contributes to the virus-induced degradation of mitochondria by autophagy, which leads to degradation of host MAVS and inhibition of type I interferon (IFN) responses. Interacts with host MAP1LC3B; this interaction contributes to the virus-induced degradation of mitochondria by autophagy, which leads to degradation of host MAVS and inhibition of type I interferon (IFN) responses. Homodimer. Homotetramer; forms heterotetrameric Gn-Gc spikes in the pre-fusion conformation. Homotrimer; forms homotrimer in the post-fusion conformation at acidic pH. Interacts (via C-terminus) with the nucleoprotein. In terms of processing, envelope polyprotein precursor is quickly cleaved in vivo just after synthesis, presumably by host signal peptidase.

It is found in the virion membrane. The protein localises to the host cell surface. Its subcellular location is the host Golgi apparatus membrane. The protein resides in the host endoplasmic reticulum membrane. It localises to the host mitochondrion. Its function is as follows. Forms homotetramers with glycoprotein C at the surface of the virion. Attaches the virion to host cell receptors including integrin ITGAV/ITGB3. This attachment induces virion internalization predominantly through clathrin-dependent endocytosis. Mediates the assembly and budding of infectious virus particles through its interaction with the nucleocapsid protein and the viral genome. May dysregulate normal immune and endothelial cell responses through an ITAM motif. Translocates to mitochondria, binds to host TUFM and recruits MAP1LC3B. These interactions induce mitochondrial autophagy and therefore destruction of host MAVS leading to inhibition of type I interferon (IFN) responses. Concomitant breakdown of glycoprotein N is apparently prevented by the nucleoprotein that may inhibit Gn-stimulated autophagosome-lysosome fusion. Interacts with the viral genomic RNA. In terms of biological role, forms homotetramers with glycoprotein N at the surface of the virion. Attaches the virion to host cell receptors including integrin ITGAV/ITGB3. This attachment induces virion internalization predominantly through clathrin-dependent endocytosis. Class II fusion protein that promotes fusion of viral membrane with host endosomal membrane after endocytosis of the virion. This Homo sapiens (Human) protein is Envelopment polyprotein (GP).